Here is a 426-residue protein sequence, read N- to C-terminus: Serine hydroxymethyltransferase (426 aa).

Residues L118 and 122 to 124 contribute to the (6S)-5,6,7,8-tetrahydrofolate site; that span reads GHL. K227 bears the N6-(pyridoxal phosphate)lysine mark.

Belongs to the SHMT family. Homodimer. Pyridoxal 5'-phosphate is required as a cofactor.

The protein localises to the cytoplasm. It catalyses the reaction (6R)-5,10-methylene-5,6,7,8-tetrahydrofolate + glycine + H2O = (6S)-5,6,7,8-tetrahydrofolate + L-serine. The protein operates within one-carbon metabolism; tetrahydrofolate interconversion. It functions in the pathway amino-acid biosynthesis; glycine biosynthesis; glycine from L-serine: step 1/1. Its function is as follows. Catalyzes the reversible interconversion of serine and glycine with tetrahydrofolate (THF) serving as the one-carbon carrier. This reaction serves as the major source of one-carbon groups required for the biosynthesis of purines, thymidylate, methionine, and other important biomolecules. Also exhibits THF-independent aldolase activity toward beta-hydroxyamino acids, producing glycine and aldehydes, via a retro-aldol mechanism. This is Serine hydroxymethyltransferase from Mycobacterium leprae (strain Br4923).